Consider the following 307-residue polypeptide: Protoheme IX farnesyltransferase (307 aa).

8 consecutive transmembrane segments (helical) span residues 32–52 (VVEL…RGIP), 54–74 (LWLV…AGAF), 105–125 (LVFA…FTNW), 126–146 (LAAG…TLIL), 169–189 (WAVV…VIFL), 222–242 (VVGL…LLLI), 244–264 (VARM…WFLY), and 287–307 (GSIA…LLPF).

Belongs to the UbiA prenyltransferase family. Protoheme IX farnesyltransferase subfamily.

The protein resides in the cell membrane. The enzyme catalyses heme b + (2E,6E)-farnesyl diphosphate + H2O = Fe(II)-heme o + diphosphate. It functions in the pathway porphyrin-containing compound metabolism; heme O biosynthesis; heme O from protoheme: step 1/1. Functionally, converts heme B (protoheme IX) to heme O by substitution of the vinyl group on carbon 2 of heme B porphyrin ring with a hydroxyethyl farnesyl side group. The sequence is that of Protoheme IX farnesyltransferase from Leifsonia xyli subsp. xyli (strain CTCB07).